The following is a 365-amino-acid chain: Probable tRNA pseudouridine synthase B (365 aa).

Residue Asp-43 is the Nucleophile of the active site. Positions 209–285 (YPKIVVKRSA…DHIFLEADDG (77 aa)) constitute a PUA domain. The segment at 300–365 (SGSGLHKDIQ…GKERHGRDHQ (66 aa)) is disordered. 3 stretches are compositionally biased toward basic and acidic residues: residues 304–318 (LHKDIQRSEGRKDTR), 326–336 (TGPEKTADRVW), and 354–365 (GGGKERHGRDHQ).

It belongs to the pseudouridine synthase TruB family. Type 2 subfamily.

The enzyme catalyses uridine(55) in tRNA = pseudouridine(55) in tRNA. Functionally, could be responsible for synthesis of pseudouridine from uracil-55 in the psi GC loop of transfer RNAs. The polypeptide is Probable tRNA pseudouridine synthase B (Thermoplasma acidophilum (strain ATCC 25905 / DSM 1728 / JCM 9062 / NBRC 15155 / AMRC-C165)).